Reading from the N-terminus, the 152-residue chain is MAARLCCYLDPERDVLCLRPLQAEPSGRPFSGLSRPAETAAAAAVPAFHGAHLSLRGLPSCAFSSAGPCALRFTSATWRCMETPMNSVTCLRKRTLGLRTAPPTVMEQYIKDCLFEQWEEQGEEPRLKVFVLGGCRHKLVGTASPCIFFTSA.

The interval 68 to 115 (PCALRFTSATWRCMETPMNSVTCLRKRTLGLRTAPPTVMEQYIKDCLF) is mitochondrial targeting sequence.

It belongs to the orthohepadnavirus protein X family. May form homodimer. May interact with host CEBPA, CFLAR, CREB1, DDB1, E4F1, HBXIP, HSPD1/HSP60, NFKBIA, POLR2E and SMAD4. Interacts with host SMC5-SMC6 complex and induces its degradation. Interacts with host TRPC4AP; leading to prevent ubiquitination of TRPC4AP. Interacts with host PLSCR1; this interaction promotes ubiquitination and degradation of HBx and impairs HBx-mediated cell proliferation. A fraction may be phosphorylated in insect cells and HepG2 cells, a human hepatoblastoma cell line. Phosphorylated in vitro by host protein kinase C or mitogen-activated protein kinase. N-acetylated in insect cells.

The protein resides in the host cytoplasm. Its subcellular location is the host nucleus. The protein localises to the host mitochondrion. In terms of biological role, multifunctional protein that plays a role in silencing host antiviral defenses and promoting viral transcription. Does not seem to be essential for HBV infection. May be directly involved in development of cirrhosis and liver cancer (hepatocellular carcinoma). Most of cytosolic activities involve modulation of cytosolic calcium. The effect on apoptosis is controversial depending on the cell types in which the studies have been conducted. May induce apoptosis by localizing in mitochondria and causing loss of mitochondrial membrane potential. May also modulate apoptosis by binding host CFLAR, a key regulator of the death-inducing signaling complex (DISC). Promotes viral transcription by using the host E3 ubiquitin ligase DDB1 to target the SMC5-SMC6 complex to proteasomal degradation. This host complex would otherwise bind to viral episomal DNA, and prevents its transcription. Moderately stimulates transcription of many different viral and cellular transcription elements. Promoters and enhancers stimulated by HBx contain DNA binding sites for NF-kappa-B, AP-1, AP-2, c-EBP, ATF/CREB, or the calcium-activated factor NF-AT. This Lagothrix lagotricha (Brown woolly monkey) protein is Protein X.